Reading from the N-terminus, the 669-residue chain is Putative heme-binding protein rrnAC3100 (669 aa).

His-181 lines the heme pocket. Disordered stretches follow at residues 260 to 351 and 451 to 477; these read RVPT…PDVS and LGGSLGEGVEGSETADDSDAQAAESSQ. The ABM domain maps to 579-667; it reads GTMGMFYTVK…VLADRPRHVF (89 aa).

In the N-terminal section; belongs to the ChdC family.

This Haloarcula marismortui (strain ATCC 43049 / DSM 3752 / JCM 8966 / VKM B-1809) (Halobacterium marismortui) protein is Putative heme-binding protein rrnAC3100.